Here is a 72-residue protein sequence, read N- to C-terminus: Small ribosomal subunit protein bS18 (72 aa).

This sequence belongs to the bacterial ribosomal protein bS18 family. Part of the 30S ribosomal subunit. Forms a tight heterodimer with protein bS6.

In terms of biological role, binds as a heterodimer with protein bS6 to the central domain of the 16S rRNA, where it helps stabilize the platform of the 30S subunit. This Francisella philomiragia subsp. philomiragia (strain ATCC 25017 / CCUG 19701 / FSC 153 / O#319-036) protein is Small ribosomal subunit protein bS18.